We begin with the raw amino-acid sequence, 346 residues long: Uroporphyrinogen decarboxylase (346 aa).

Substrate is bound by residues 21–25 (RQAGR), Asp71, Tyr146, Ser201, and His316.

The protein belongs to the uroporphyrinogen decarboxylase family. In terms of assembly, homodimer.

It localises to the cytoplasm. The enzyme catalyses uroporphyrinogen III + 4 H(+) = coproporphyrinogen III + 4 CO2. The protein operates within porphyrin-containing compound metabolism; protoporphyrin-IX biosynthesis; coproporphyrinogen-III from 5-aminolevulinate: step 4/4. Its function is as follows. Catalyzes the decarboxylation of four acetate groups of uroporphyrinogen-III to yield coproporphyrinogen-III. In Rickettsia rickettsii (strain Iowa), this protein is Uroporphyrinogen decarboxylase.